Consider the following 256-residue polypeptide: (E)-benzylidenesuccinyl-CoA hydratase (256 aa).

Glu110 acts as the Nucleophile in catalysis. Catalysis depends on Glu130, which acts as the Proton acceptor.

Belongs to the enoyl-CoA hydratase/isomerase family. Homotrimer.

The enzyme catalyses (2S)-[(R)-hydroxy(phenyl)methyl]succinyl-CoA = (E)-2-benzylidenesuccinyl-CoA + H2O. Its pathway is xenobiotic degradation; toluene degradation. Functionally, involved in an anaerobic toluene degradation pathway. Catalyzes the hydration of (E)-2-benzylidenesuccinyl-CoA to the corresponding alcohol intermediate, 2-(alpha-hydroxybenzyl)succinyl-CoA. Also accepts the N-acetylcysteamine (NAC) thioester of (E)-benzylidenesuccinate. In Thauera aromatica, this protein is (E)-benzylidenesuccinyl-CoA hydratase.